The primary structure comprises 241 residues: Uridylate kinase (241 aa).

K15–G18 provides a ligand contact to ATP. The involved in allosteric activation by GTP stretch occupies residues G23–G28. A UMP-binding site is contributed by G57. Residues G58 and R62 each contribute to the ATP site. UMP-binding positions include D77 and T138 to T145. Residues T165, F171, and D174 each coordinate ATP.

It belongs to the UMP kinase family. In terms of assembly, homohexamer.

The protein localises to the cytoplasm. The catalysed reaction is UMP + ATP = UDP + ADP. The protein operates within pyrimidine metabolism; CTP biosynthesis via de novo pathway; UDP from UMP (UMPK route): step 1/1. With respect to regulation, allosterically activated by GTP. Inhibited by UTP. In terms of biological role, catalyzes the reversible phosphorylation of UMP to UDP. The sequence is that of Uridylate kinase from Sodalis glossinidius (strain morsitans).